Reading from the N-terminus, the 1294-residue chain is von Willebrand factor A domain-containing protein 3B (1294 aa).

In terms of domain architecture, VWFA spans 508-684 (CIYILIDTSH…EDLTLLVKEM (177 aa)). Disordered regions lie at residues 732–754 (CAKP…KGPW), 778–803 (RSQM…SSRR), 1012–1036 (APGE…DPLK), and 1193–1247 (DTQD…PRTA). Residues 738 to 748 (DVDSTQTSSLN) are compositionally biased toward polar residues. The span at 778–787 (RSQMSSLRSS) shows a compositional bias: low complexity. Residues 1193–1202 (DTQDSREPRR) show a composition bias toward basic and acidic residues. Basic residues predominate over residues 1203–1212 (EKPRRKKRPA). The segment covering 1213–1236 (KQPLQQAAPSDSDGSSHGISSHGS) has biased composition (low complexity).

The protein resides in the cytoplasm. This is von Willebrand factor A domain-containing protein 3B (VWA3B) from Homo sapiens (Human).